The primary structure comprises 357 residues: Fructose-bisphosphate aldolase, cytoplasmic isozyme (357 aa).

Substrate is bound by residues Arg-53 and Lys-142. The active-site Proton acceptor is the Glu-183. Lys-225 functions as the Schiff-base intermediate with dihydroxyacetone-P in the catalytic mechanism.

It belongs to the class I fructose-bisphosphate aldolase family.

The protein localises to the cytoplasm. The enzyme catalyses beta-D-fructose 1,6-bisphosphate = D-glyceraldehyde 3-phosphate + dihydroxyacetone phosphate. It functions in the pathway carbohydrate degradation; glycolysis; D-glyceraldehyde 3-phosphate and glycerone phosphate from D-glucose: step 4/4. The sequence is that of Fructose-bisphosphate aldolase, cytoplasmic isozyme from Spinacia oleracea (Spinach).